The sequence spans 115 residues: Superoxide reductase (115 aa).

The Fe cation site is built by Glu14, His16, His41, His47, Cys102, and His105.

It belongs to the desulfoferrodoxin family. In terms of assembly, homotetramer. Fe cation is required as a cofactor.

The enzyme catalyses reduced [rubredoxin] + superoxide + 2 H(+) = oxidized [rubredoxin] + H2O2. Its function is as follows. Uses electrons from reduced NADP, by way of rubredoxin and an oxidoreductase, to catalyze the reduction of superoxide to hydrogen peroxide. This chain is Superoxide reductase (sorA), found in Pyrococcus horikoshii (strain ATCC 700860 / DSM 12428 / JCM 9974 / NBRC 100139 / OT-3).